Here is a 738-residue protein sequence, read N- to C-terminus: MDAFKLLTRATKLKGGAAPSSAQSSTRLPSTGKAANPQLFRSSEADKVLEEARHGKKRKRVAGPEAAESDDDGAELNFFGSSKARRSSASMAKEQEKEQQEQQEHRDDTSDADDADEMDEVQCRTVLNAHKIKVTDMRDLEEIQTVRVESEEPKKKKKKRKQQEESTPALTKKEQKKARRVYPQPLVSFKELRTRYKISRRLAENIAEQGFSVPTEVQLGTLPLLLEGFKVSGNSKDAESIEPDLLVVAPTGSGKTLSFLIPVINKIVRHHHEQEEERGIFSVVVAPTKELASQIVNEGRKLVHGTGVKITLMKKGMRVVDREDDDDENSHSEDSEEGSESEQDEPSTTRKKKGKAPVTKSDILVTTPLLLVNALSANRTKPMATLPLVRNIVLDEADVLLDELFRDQTLDIWRACTHPELRASLWSATMGSNIEDLAKSTIKERKQAYDRTNSYPLLRLVVGLKDSAIPNIEHKLVYAATEQGKLLGLRQLLHPAAASASDVRLRPPFLIFTQTIPRAIALHSELRYDIPAEAGGSSRIAVLHSDLSDGQRSEIMKNFRKGEIWILVTTDLLARGVDFRGINGVVNYDIPNSAAVYVHRVGRTGRAGREGGIAVTYYTKEDIPYVKSIANIIDVSEKLRGKDGEKSIQKWLLDALPDLSKKDKKELKKHGVKARQSNLKSVKDDKEHRKTRISTKSGFDRRMENKKKALIAASRNRKSKTQSTDPGSDNESWDGLDG.

2 disordered regions span residues 13–116 (LKGG…DDAD) and 148–179 (VESE…KKAR). Polar residues predominate over residues 20–29 (SSAQSSTRLP). Basic and acidic residues-rich tracts occupy residues 43-53 (SEADKVLEEAR) and 93-109 (KEQE…RDDT). The Q motif signature appears at 191–219 (ELRTRYKISRRLAENIAEQGFSVPTEVQL). The 213-residue stretch at 236-448 (KDAESIEPDL…KSTIKERKQA (213 aa)) folds into the Helicase ATP-binding domain. 249 to 256 (APTGSGKT) contributes to the ATP binding site. The disordered stretch occupies residues 319 to 358 (VVDREDDDDENSHSEDSEEGSESEQDEPSTTRKKKGKAPV). Residues 322-345 (REDDDDENSHSEDSEEGSESEQDE) show a composition bias toward acidic residues. The DEAD box signature appears at 395–398 (DEAD). The region spanning 488 to 656 (GLRQLLHPAA…SIQKWLLDAL (169 aa)) is the Helicase C-terminal domain. The segment at 664-738 (KKELKKHGVK…DNESWDGLDG (75 aa)) is disordered. Positions 698–707 (GFDRRMENKK) are enriched in basic and acidic residues. A compositionally biased stretch (basic residues) spans 708–720 (KALIAASRNRKSK). Positions 721–730 (TQSTDPGSDN) are enriched in polar residues.

This sequence belongs to the DEAD box helicase family. DDX52/ROK1 subfamily. As to quaternary structure, interacts with the U3 snoRNA and is associated with the 90S and 40S pre-ribosomes.

The protein resides in the nucleus. Its subcellular location is the nucleolus. The catalysed reaction is ATP + H2O = ADP + phosphate + H(+). In terms of biological role, ATP-dependent RNA helicase involved in 40S ribosomal subunit biogenesis. Required for the processing and cleavage of 35S pre-rRNA at sites A0, A1, and A2, leading to mature 18S rRNA. The chain is ATP-dependent RNA helicase rok1 (rok1) from Neosartorya fischeri (strain ATCC 1020 / DSM 3700 / CBS 544.65 / FGSC A1164 / JCM 1740 / NRRL 181 / WB 181) (Aspergillus fischerianus).